Reading from the N-terminus, the 295-residue chain is Protease HtpX (295 aa).

2 consecutive transmembrane segments (helical) span residues 4-24 (ILLFVATNLAVVLVASITLSL) and 41-61 (SSLLVFCAVFGFAGSLVSLFI). Position 147 (His-147) interacts with Zn(2+). Residue Glu-148 is part of the active site. His-151 provides a ligand contact to Zn(2+). 2 helical membrane-spanning segments follow: residues 158–178 (VTLALVQGVVNTFVMFFARII) and 199–219 (VATIVAELILGILASMIVMWF). Glu-224 provides a ligand contact to Zn(2+).

It belongs to the peptidase M48B family. It depends on Zn(2+) as a cofactor.

The protein localises to the cell inner membrane. The polypeptide is Protease HtpX (Pseudomonas putida (strain ATCC 700007 / DSM 6899 / JCM 31910 / BCRC 17059 / LMG 24140 / F1)).